The sequence spans 234 residues: Transcriptional regulatory protein CseB (234 aa).

In terms of domain architecture, Response regulatory spans 6–119 (HVLFVEDDDV…VLVARIRAVL (114 aa)). Position 55 is a 4-aspartylphosphate (D55). Residues 140 to 234 (GGVLTFGDLE…VRGFGYKLKA (95 aa)) constitute a DNA-binding region (ompR/PhoB-type).

In terms of processing, phosphorylated by CseC.

Its subcellular location is the cytoplasm. Its function is as follows. Member of the two-component regulatory system CseB/CseC involved in the stability of the cell envelope. CseB activates transcription of RNA polymerase sigma-E factor, in response to changes in the cell envelope. This chain is Transcriptional regulatory protein CseB (cseB), found in Streptomyces coelicolor (strain ATCC BAA-471 / A3(2) / M145).